Consider the following 252-residue polypeptide: Sulfoacetaldehyde reductase 2 (252 aa).

6-30 is a binding site for NADP(+); it reads LITGATSGFGRAAARRFADAGWSLI. Ser139 is a binding site for substrate. Residue Tyr152 is the Proton acceptor of the active site.

It belongs to the short-chain dehydrogenases/reductases (SDR) family. As to quaternary structure, homodimer and heterotetramer.

The catalysed reaction is 2-hydroxyethane-1-sulfonate + NADP(+) = sulfoacetaldehyde + NADPH + H(+). It functions in the pathway organosulfur degradation. In terms of biological role, catalyzes the formation of isethionate from 2-sulfoacetaldehyde in the deaminative pathway of taurine. Constitutively expressed enzyme that only mediates a small part of the activity observed in taurine-grown cells. In Chromohalobacter salexigens (strain ATCC BAA-138 / DSM 3043 / CIP 106854 / NCIMB 13768 / 1H11), this protein is Sulfoacetaldehyde reductase 2 (isfD2).